Here is a 211-residue protein sequence, read N- to C-terminus: ATP phosphoribosyltransferase (211 aa).

The protein belongs to the ATP phosphoribosyltransferase family. Short subfamily. As to quaternary structure, heteromultimer composed of HisG and HisZ subunits.

The protein localises to the cytoplasm. It carries out the reaction 1-(5-phospho-beta-D-ribosyl)-ATP + diphosphate = 5-phospho-alpha-D-ribose 1-diphosphate + ATP. It functions in the pathway amino-acid biosynthesis; L-histidine biosynthesis; L-histidine from 5-phospho-alpha-D-ribose 1-diphosphate: step 1/9. In terms of biological role, catalyzes the condensation of ATP and 5-phosphoribose 1-diphosphate to form N'-(5'-phosphoribosyl)-ATP (PR-ATP). Has a crucial role in the pathway because the rate of histidine biosynthesis seems to be controlled primarily by regulation of HisG enzymatic activity. This Pseudomonas syringae pv. syringae (strain B728a) protein is ATP phosphoribosyltransferase.